The chain runs to 155 residues: Interleukin-2 (155 aa).

Positions 1–20 (MYKMQLVACIALSLVLITNS) are cleaved as a signal peptide. Threonine 23 carries O-linked (GalNAc...) threonine glycosylation. Cysteines 77 and 125 form a disulfide.

Belongs to the IL-2 family.

It localises to the secreted. Functionally, cytokine produced by activated CD4-positive helper T-cells and to a lesser extend activated CD8-positive T-cells and natural killer (NK) cells that plays pivotal roles in the immune response and tolerance. Binds to a receptor complex composed of either the high-affinity trimeric IL-2R (IL2RA/CD25, IL2RB/CD122 and IL2RG/CD132) or the low-affinity dimeric IL-2R (IL2RB and IL2RG). Interaction with the receptor leads to oligomerization and conformation changes in the IL-2R subunits resulting in downstream signaling starting with phosphorylation of JAK1 and JAK3. In turn, JAK1 and JAK3 phosphorylate the receptor to form a docking site leading to the phosphorylation of several substrates including STAT5. This process leads to activation of several pathways including STAT, phosphoinositide-3-kinase/PI3K and mitogen-activated protein kinase/MAPK pathways. Functions as a T-cell growth factor and can increase NK-cell cytolytic activity as well. Promotes strong proliferation of activated B-cells and subsequently immunoglobulin production. Plays a pivotal role in regulating the adaptive immune system by controlling the survival and proliferation of regulatory T-cells, which are required for the maintenance of immune tolerance. Moreover, participates in the differentiation and homeostasis of effector T-cell subsets, including Th1, Th2, Th17 as well as memory CD8-positive T-cells. The polypeptide is Interleukin-2 (IL2) (Dasypus novemcinctus (Nine-banded armadillo)).